A 172-amino-acid chain; its full sequence is Cell division protein SepF (172 aa).

The interval 18–73 (RRYDEEDLPDEELTTEVYSDDGYEPSSEVTQLHHHDSNEQHARGHKAVQHRRRSEL) is disordered. The segment covering 22–40 (EEDLPDEELTTEVYSDDGY) has biased composition (acidic residues). Positions 48–59 (QLHHHDSNEQHA) are enriched in basic and acidic residues. Positions 60–70 (RGHKAVQHRRR) are enriched in basic residues.

Belongs to the SepF family. As to quaternary structure, homodimer. Interacts with FtsZ.

The protein localises to the cytoplasm. Cell division protein that is part of the divisome complex and is recruited early to the Z-ring. Probably stimulates Z-ring formation, perhaps through the cross-linking of FtsZ protofilaments. Its function overlaps with FtsA. This chain is Cell division protein SepF, found in Cutibacterium acnes (strain DSM 16379 / KPA171202) (Propionibacterium acnes).